Here is a 388-residue protein sequence, read N- to C-terminus: P2X purinoceptor 4 (388 aa).

The Cytoplasmic segment spans residues 1–33; that stretch reads MTGCCTVLGAFLFEYDTPRIVLIRSRKVGLMNR. Residues 34 to 54 form a helical membrane-spanning segment; that stretch reads TVQLLILAYVIGWVFVWEKGY. Residues 55–338 lie on the Extracellular side of the membrane; the sequence is QETDSVVSSV…KFDIIPTMIN (284 aa). The ATP site is built by lysine 67 and lysine 69. Lysine 67 and lysine 69 together coordinate CTP. N-linked (GlcNAc...) asparagine glycosylation is found at asparagine 75, asparagine 110, asparagine 131, asparagine 153, and asparagine 184. Cystine bridges form between cysteine 116–cysteine 165, cysteine 126–cysteine 149, and cysteine 132–cysteine 159. ATP-binding residues include threonine 186 and leucine 188. Position 186 (threonine 186) interacts with CTP. Asparagine 199 and asparagine 208 each carry an N-linked (GlcNAc...) asparagine glycan. 2 disulfides stabilise this stretch: cysteine 217–cysteine 227 and cysteine 261–cysteine 270. ATP is bound by residues asparagine 293, arginine 295, and lysine 313. The CTP site is built by asparagine 293, arginine 295, and lysine 313. Residues 339–359 form a helical membrane-spanning segment; it reads IGSGLALLGVATVLCDVIVLY. The Cytoplasmic segment spans residues 360–388; the sequence is CMKKRYYYREKKYKYVEDYEQGLGNQMEQ.

It belongs to the P2X receptor family. In terms of assembly, functional P2RXs are organized as homomeric and heteromeric trimers. Forms heterotrimer with P2RX1. Interacts with P2RX7 (via C-terminus); this interaction is functional only in the presence of ATP. Forms heterotrimer with P2RX4; functional differences between homomeric P2RX4 and P2RX4/6 heterotrimer are minor. Interacts with AP1M2.

The protein localises to the cell membrane. The protein resides in the lysosome membrane. It carries out the reaction K(+)(in) = K(+)(out). The catalysed reaction is Na(+)(in) = Na(+)(out). It catalyses the reaction Ca(2+)(in) = Ca(2+)(out). Activated by ATP. pH-dependent and inhibited by acidic pH. Its function is as follows. ATP-gated nonselective transmembrane cation channel permeable to potassium, sodium and calcium. CTP, but not GTP or UTP, functions as a weak affinity agonist for P2RX4. Activated by extracellularly released ATP, it plays multiple role in immunity and central nervous system physiology. Could also function as an ATP-gated cation channel of lysosomal membranes. This is P2X purinoceptor 4 (P2RX4) from Bos taurus (Bovine).